The primary structure comprises 267 residues: Tryptophan synthase alpha chain (267 aa).

Catalysis depends on proton acceptor residues Glu-51 and Asp-62.

It belongs to the TrpA family. As to quaternary structure, tetramer of two alpha and two beta chains.

It carries out the reaction (1S,2R)-1-C-(indol-3-yl)glycerol 3-phosphate + L-serine = D-glyceraldehyde 3-phosphate + L-tryptophan + H2O. The protein operates within amino-acid biosynthesis; L-tryptophan biosynthesis; L-tryptophan from chorismate: step 5/5. In terms of biological role, the alpha subunit is responsible for the aldol cleavage of indoleglycerol phosphate to indole and glyceraldehyde 3-phosphate. This chain is Tryptophan synthase alpha chain, found in Prochlorococcus marinus (strain SARG / CCMP1375 / SS120).